A 1020-amino-acid polypeptide reads, in one-letter code: 26S proteasome non-ATPase regulatory subunit 1 (1020 aa).

Residues 279–322 are disordered; sequence TALPSTFKPQGTTSEDGAKSEGDKSKSDEDITEETPADDKVERT. Residues 281–293 show a composition bias toward polar residues; that stretch reads LPSTFKPQGTTSE. Phosphothreonine is present on T291. Positions 294–307 are enriched in basic and acidic residues; it reads DGAKSEGDKSKSDE. Phosphoserine is present on residues S298, S303, and S305. T310 carries the phosphothreonine modification. 10 PC repeats span residues 418–452, 456–489, 491–525, 526–560, 562–595, 596–631, 632–664, 666–701, 702–742, and 745–777; these read TATA…SSGY, GALY…ENVR, GGCL…VTGE, AAGI…EKIL, GLAV…VLRR, SGMY…DVRR, AAVT…PHVR, GAAM…FVRQ, GALI…DVMA, and GAIL…QAVV. 2 disordered regions span residues 855 to 950 and 999 to 1020; these read QKRR…NPAR and FGPM…YIED. Basic and acidic residues-rich tracts occupy residues 858 to 867 and 876 to 939; these read RENADKKEDE and KEGA…KEPE. Positions 1003–1020 are enriched in acidic residues; it reads NDEEKEPEPPEPFEYIED.

This sequence belongs to the proteasome subunit S1 family.

Acts as a regulatory subunit of the 26S proteasome which is involved in the ATP-dependent degradation of ubiquitinated proteins. This is 26S proteasome non-ATPase regulatory subunit 1 (Rpn2) from Drosophila melanogaster (Fruit fly).